A 751-amino-acid chain; its full sequence is Methionine--tRNA ligase, cytoplasmic (751 aa).

Position 2 is an N-acetylserine (Ser2). The segment at 36–92 is interaction with ARC1; that stretch reads LKPEVDNDNAAMELRNTKEPFLLFDANAILRYVMDDFEGQTSDKYQFALASLQNLLY. Residues 205-215 carry the 'HIGH' region motif; that stretch reads PYVNNVPHLGN. Lys411 provides a ligand contact to ATP. The 'KMSKS' region motif lies at 525 to 529; that stretch reads KFSKS.

This sequence belongs to the class-I aminoacyl-tRNA synthetase family. In terms of assembly, component of a yeast aminoacyl-tRNA synthase (aaRS) complex formed by methionyl-tRNA synthase MES1, glutamyl-tRNA synthase GUS1 and the tRNA aminoacylation cofactor ARC1 in a stoichiometric complex. Interacts (via N-ter) with ARC1 (via N-ter). Can also form a stable binary complex with ARC1 that is functional in terms of aminoacylation. ARC1 increases the affinity for cognate tRNAs due to the presence of a tRNA binding domain in the middle and C-terminal part of ARC1.

It localises to the cytoplasm. The enzyme catalyses tRNA(Met) + L-methionine + ATP = L-methionyl-tRNA(Met) + AMP + diphosphate. Functionally, catalyzes the attachment of methionine to tRNA(Met) in a two-step reaction: methionine is first activated by ATP to form Met-AMP and then transferred to the acceptor end of tRNA(Met). The chain is Methionine--tRNA ligase, cytoplasmic (MES1) from Saccharomyces cerevisiae (strain ATCC 204508 / S288c) (Baker's yeast).